The sequence spans 783 residues: Cadherin-5 (783 aa).

Residues 1–25 (MQALVMLLATGATYYLGLLAAAAAA) form the signal peptide. Positions 26 to 45 (VNPGRPNTPGSLPAHRRQKR) are excised as a propeptide. 5 consecutive Cadherin domains span residues 44-149 (KRDW…WPVF), 150-256 (THRV…FPIF), 257-371 (TQNR…PPIF), 372-478 (QQPF…APEF), and 478-585 (FAKP…GEFT). The Extracellular portion of the chain corresponds to 46–599 (DWIWNQMHID…AAAQVGISIQ (554 aa)). Residues Glu56 and Glu57 each coordinate Ca(2+). Asn59 is a glycosylation site (N-linked (GlcNAc...) asparagine). Residues Asp107, Glu109, Asp141, Val142, Asn143, Asp144, and Asn145 each coordinate Ca(2+). Asn155 carries N-linked (GlcNAc...) asparagine glycosylation. Residues Asp175, Asp177, His184, and Asp229 each coordinate Ca(2+). Residues Asn361, Asn441, and Asn523 are each glycosylated (N-linked (GlcNAc...) asparagine). Residues 600–620 (ALVAIFLCILTFTVITLLIIL) form a helical membrane-spanning segment. Positions 621–660 (RRRLRKQARAHGKSVPEIHEQLVTYDEEGGGEMDTTSYDV) are required for interaction with PALS1. The Cytoplasmic segment spans residues 621 to 783 (RRRLRKQARA…GSDPQEELVY (163 aa)).

Part of a complex composed of AMOTL2, MAGI1 and CDH5, within the complex AMOTL2 acts as a scaffold protein for the interaction of MAGI1 with CDH5. The complex is required for coupling actin fibers to cell junctions in endothelial cells. Within the complex AMOTL2 (via its N-terminus) interacts with CDH5. Interacts (via cadherin 5 domain) with PTPRB. Interacts with TRPC4. Interacts with KRIT1. Interacts with PARD3. Interacts with RTN4 (isoform B). Interacts with PALS1; the interaction promotes PALS1 localization to cell junctions and is required for CDH5-mediated vascular lumen formation and endothelial cell. Interacts with CTNND1/p120-catenin; the interaction controls CADH5 endocytosis. In terms of processing, phosphorylated on tyrosine residues by KDR/VEGFR-2. Dephosphorylated by PTPRB. Post-translationally, O-glycosylated.

It localises to the cell junction. The protein localises to the adherens junction. Its subcellular location is the cell membrane. The protein resides in the cytoplasm. In terms of biological role, cadherins are calcium-dependent cell adhesion proteins. They preferentially interact with themselves in a homophilic manner in connecting cells; cadherins may thus contribute to the sorting of heterogeneous cell types. This cadherin may play a important role in endothelial cell biology through control of the cohesion and organization of the intercellular junctions. It associates with alpha-catenin forming a link to the cytoskeleton. Plays a role in coupling actin fibers to cell junctions in endothelial cells, via acting as a cell junctional complex anchor for AMOTL2 and MAGI1. Acts in concert with KRIT1 and PALS1 to establish and maintain correct endothelial cell polarity and vascular lumen. These effects are mediated by recruitment and activation of the Par polarity complex and RAP1B. Required for activation of PRKCZ and for localization of phosphorylated PRKCZ, PARD3, TIAM1 and RAP1B to the cell junction. Associates with CTNND1/p120-catenin to control CADH5 endocytosis. The polypeptide is Cadherin-5 (Bos taurus (Bovine)).